An 83-amino-acid polypeptide reads, in one-letter code: Small ribosomal subunit protein bS16 (83 aa).

The protein belongs to the bacterial ribosomal protein bS16 family.

The polypeptide is Small ribosomal subunit protein bS16 (Polaromonas sp. (strain JS666 / ATCC BAA-500)).